The chain runs to 191 residues: Cdc42 homolog (191 aa).

A GTP-binding site is contributed by 10–17 (GDGAVGKT). The short motif at 32-40 (YVPTVFDNY) is the Effector region element. GTP-binding positions include 57–61 (DTAGQ) and 115–118 (TQID). The residue at position 188 (Cys188) is a Cysteine methyl ester. Cys188 carries the S-geranylgeranyl cysteine lipid modification. Positions 189–191 (KFL) are cleaved as a propeptide — removed in mature form.

The protein belongs to the small GTPase superfamily. Rho family. CDC42 subfamily.

It is found in the cell junction. It localises to the adherens junction. Its subcellular location is the cell membrane. Regulates mbt kinase activity and is also required to recruit mbt to adherens junctions. Together with mbt, regulates photoreceptor cell morphogenesis. This chain is Cdc42 homolog, found in Aedes aegypti (Yellowfever mosquito).